The primary structure comprises 274 residues: tRNA-cytidine(32) 2-sulfurtransferase (274 aa).

The short motif at 40 to 45 (SGGKDS) is the PP-loop motif element. Residues C115, C118, and C206 each contribute to the [4Fe-4S] cluster site.

This sequence belongs to the TtcA family. As to quaternary structure, homodimer. Mg(2+) serves as cofactor. [4Fe-4S] cluster is required as a cofactor.

It localises to the cytoplasm. The enzyme catalyses cytidine(32) in tRNA + S-sulfanyl-L-cysteinyl-[cysteine desulfurase] + AH2 + ATP = 2-thiocytidine(32) in tRNA + L-cysteinyl-[cysteine desulfurase] + A + AMP + diphosphate + H(+). The protein operates within tRNA modification. Catalyzes the ATP-dependent 2-thiolation of cytidine in position 32 of tRNA, to form 2-thiocytidine (s(2)C32). The sulfur atoms are provided by the cysteine/cysteine desulfurase (IscS) system. The polypeptide is tRNA-cytidine(32) 2-sulfurtransferase (Pseudomonas syringae pv. syringae (strain B728a)).